A 434-amino-acid polypeptide reads, in one-letter code: Alpha-enolase (434 aa).

Residue Ser40 participates in Mg(2+) binding. 2 residues coordinate substrate: His158 and Glu167. Catalysis depends on Glu210, which acts as the Proton donor. Residues Asp245, Glu293, and Asp318 each coordinate Mg(2+). Residues Glu293, Asp318, 370–373 (SHRS), and Lys394 each bind substrate.

Belongs to the enolase family. As to quaternary structure, homodimer. The cofactor is Mg(2+).

The protein resides in the cytoplasm. It carries out the reaction (2R)-2-phosphoglycerate = phosphoenolpyruvate + H2O. It functions in the pathway carbohydrate degradation; glycolysis; pyruvate from D-glyceraldehyde 3-phosphate: step 4/5. The protein is Alpha-enolase of Trachemys scripta elegans (Red-eared slider turtle).